Reading from the N-terminus, the 612-residue chain is Threonine--tRNA ligase (612 aa).

The segment at 218–509 is catalytic; sequence DHRKLGVELG…LSEHFGGNFP (292 aa). Positions 310, 361, and 486 each coordinate Zn(2+).

Belongs to the class-II aminoacyl-tRNA synthetase family. Homodimer. Zn(2+) serves as cofactor.

It is found in the cytoplasm. The enzyme catalyses tRNA(Thr) + L-threonine + ATP = L-threonyl-tRNA(Thr) + AMP + diphosphate + H(+). Functionally, catalyzes the attachment of threonine to tRNA(Thr) in a two-step reaction: L-threonine is first activated by ATP to form Thr-AMP and then transferred to the acceptor end of tRNA(Thr). Also edits incorrectly charged L-seryl-tRNA(Thr). The protein is Threonine--tRNA ligase of Helicobacter pylori (strain P12).